A 216-amino-acid polypeptide reads, in one-letter code: ATP-dependent Clp protease proteolytic subunit (216 aa).

Ser101 (nucleophile) is an active-site residue. Residue His126 is part of the active site.

This sequence belongs to the peptidase S14 family. Component of the chloroplastic Clp protease core complex.

It localises to the plastid. The protein resides in the chloroplast stroma. The enzyme catalyses Hydrolysis of proteins to small peptides in the presence of ATP and magnesium. alpha-casein is the usual test substrate. In the absence of ATP, only oligopeptides shorter than five residues are hydrolyzed (such as succinyl-Leu-Tyr-|-NHMec, and Leu-Tyr-Leu-|-Tyr-Trp, in which cleavage of the -Tyr-|-Leu- and -Tyr-|-Trp bonds also occurs).. Cleaves peptides in various proteins in a process that requires ATP hydrolysis. Has a chymotrypsin-like activity. Plays a major role in the degradation of misfolded proteins. This is ATP-dependent Clp protease proteolytic subunit from Triticum aestivum (Wheat).